Here is a 131-residue protein sequence, read N- to C-terminus: UPF0102 protein Ent638_3585 (131 aa).

The disordered stretch occupies residues 1–20 (MAQIPAGADRPGKLSRKQTG).

It belongs to the UPF0102 family.

The sequence is that of UPF0102 protein Ent638_3585 from Enterobacter sp. (strain 638).